The sequence spans 447 residues: Tubulin beta chain (447 aa).

Gln11, Glu69, Ser138, Gly142, Thr143, Gly144, Asn204, and Asn226 together coordinate GTP. A Mg(2+)-binding site is contributed by Glu69. Positions 427–447 are disordered; the sequence is DAGIDEEEEEYEEELPLEGEE. A compositionally biased stretch (acidic residues) spans 429–447; sequence GIDEEEEEYEEELPLEGEE.

Belongs to the tubulin family. Dimer of alpha and beta chains. A typical microtubule is a hollow water-filled tube with an outer diameter of 25 nm and an inner diameter of 15 nM. Alpha-beta heterodimers associate head-to-tail to form protofilaments running lengthwise along the microtubule wall with the beta-tubulin subunit facing the microtubule plus end conferring a structural polarity. Microtubules usually have 13 protofilaments but different protofilament numbers can be found in some organisms and specialized cells. Mg(2+) serves as cofactor.

The protein resides in the cytoplasm. The protein localises to the cytoskeleton. Tubulin is the major constituent of microtubules, a cylinder consisting of laterally associated linear protofilaments composed of alpha- and beta-tubulin heterodimers. Microtubules grow by the addition of GTP-tubulin dimers to the microtubule end, where a stabilizing cap forms. Below the cap, tubulin dimers are in GDP-bound state, owing to GTPase activity of alpha-tubulin. This is Tubulin beta chain (TUB2) from Hapsidospora chrysogena (Acremonium chrysogenum).